We begin with the raw amino-acid sequence, 264 residues long: Hydroxyethylthiazole kinase (264 aa).

M52 contacts substrate. 2 residues coordinate ATP: R127 and T173. Residue G200 coordinates substrate.

This sequence belongs to the Thz kinase family. Requires Mg(2+) as cofactor.

It catalyses the reaction 5-(2-hydroxyethyl)-4-methylthiazole + ATP = 4-methyl-5-(2-phosphooxyethyl)-thiazole + ADP + H(+). The protein operates within cofactor biosynthesis; thiamine diphosphate biosynthesis; 4-methyl-5-(2-phosphoethyl)-thiazole from 5-(2-hydroxyethyl)-4-methylthiazole: step 1/1. In terms of biological role, catalyzes the phosphorylation of the hydroxyl group of 4-methyl-5-beta-hydroxyethylthiazole (THZ). This chain is Hydroxyethylthiazole kinase, found in Pectobacterium carotovorum subsp. carotovorum (strain PC1).